The primary structure comprises 436 residues: 3-ketoacyl-CoA thiolase (436 aa).

C99 (acyl-thioester intermediate) is an active-site residue. Residues H392 and C422 each act as proton acceptor in the active site.

It belongs to the thiolase-like superfamily. Thiolase family. As to quaternary structure, heterotetramer of two alpha chains (FadJ) and two beta chains (FadI).

It is found in the cytoplasm. It catalyses the reaction an acyl-CoA + acetyl-CoA = a 3-oxoacyl-CoA + CoA. The protein operates within lipid metabolism; fatty acid beta-oxidation. In terms of biological role, catalyzes the final step of fatty acid oxidation in which acetyl-CoA is released and the CoA ester of a fatty acid two carbons shorter is formed. This chain is 3-ketoacyl-CoA thiolase, found in Shewanella putrefaciens (strain CN-32 / ATCC BAA-453).